The sequence spans 988 residues: Isoleucine--tRNA ligase (988 aa).

The 'HIGH' region signature appears at 60-70; sequence PYANGALHMGH. Residue E570 coordinates L-isoleucyl-5'-AMP. A 'KMSKS' region motif is present at residues 611 to 615; the sequence is KMSKS. K614 provides a ligand contact to ATP. Residues C957, C960, C977, and C980 each coordinate Zn(2+).

It belongs to the class-I aminoacyl-tRNA synthetase family. IleS type 1 subfamily. Monomer. Zn(2+) serves as cofactor.

It is found in the cytoplasm. The enzyme catalyses tRNA(Ile) + L-isoleucine + ATP = L-isoleucyl-tRNA(Ile) + AMP + diphosphate. Functionally, catalyzes the attachment of isoleucine to tRNA(Ile). As IleRS can inadvertently accommodate and process structurally similar amino acids such as valine, to avoid such errors it has two additional distinct tRNA(Ile)-dependent editing activities. One activity is designated as 'pretransfer' editing and involves the hydrolysis of activated Val-AMP. The other activity is designated 'posttransfer' editing and involves deacylation of mischarged Val-tRNA(Ile). The sequence is that of Isoleucine--tRNA ligase from Synechocystis sp. (strain ATCC 27184 / PCC 6803 / Kazusa).